Reading from the N-terminus, the 705-residue chain is Ribosomal RNA large subunit methyltransferase K/L (705 aa).

A THUMP domain is found at Leu43–Leu154.

The protein belongs to the methyltransferase superfamily. RlmKL family.

The protein resides in the cytoplasm. The catalysed reaction is guanosine(2445) in 23S rRNA + S-adenosyl-L-methionine = N(2)-methylguanosine(2445) in 23S rRNA + S-adenosyl-L-homocysteine + H(+). The enzyme catalyses guanosine(2069) in 23S rRNA + S-adenosyl-L-methionine = N(2)-methylguanosine(2069) in 23S rRNA + S-adenosyl-L-homocysteine + H(+). Functionally, specifically methylates the guanine in position 2445 (m2G2445) and the guanine in position 2069 (m7G2069) of 23S rRNA. The protein is Ribosomal RNA large subunit methyltransferase K/L of Pectobacterium atrosepticum (strain SCRI 1043 / ATCC BAA-672) (Erwinia carotovora subsp. atroseptica).